We begin with the raw amino-acid sequence, 293 residues long: Acetylglutamate kinase (293 aa).

Substrate contacts are provided by residues 68 to 69, R90, and N189; that span reads GG.

Belongs to the acetylglutamate kinase family. ArgB subfamily.

Its subcellular location is the cytoplasm. It catalyses the reaction N-acetyl-L-glutamate + ATP = N-acetyl-L-glutamyl 5-phosphate + ADP. Its pathway is amino-acid biosynthesis; L-arginine biosynthesis; N(2)-acetyl-L-ornithine from L-glutamate: step 2/4. Functionally, catalyzes the ATP-dependent phosphorylation of N-acetyl-L-glutamate. The sequence is that of Acetylglutamate kinase from Caldicellulosiruptor saccharolyticus (strain ATCC 43494 / DSM 8903 / Tp8T 6331).